A 367-amino-acid chain; its full sequence is MVKETHRFETFTEEPIRLIGEEGEWLGDFPLDLEGEKLRRLYRDMLAARMLDERYTILIRTGKTSFIAPAAGHEAAQVAIAHAIRPGFDWVFPYYRDHGLALALGIPLKELLGQMLATKADPNKGRQMPEHPGSKALNFFTVASPIASHVPPAAGAAISMKLLRTGQVAVCTFGDGATSEGDWYAGINFAAVQGAPAVFIAENNFYAISVDYRHQTHSPTIADKAHAFGIPGYLVDGMDVLASYYVVKEAVERARRGEGPSLVELRVYRYGPHSSADDDSRYRPKEEVAFWRKKDPIPRFRRFLEARGLWNEEWEEDVREEIRAELERGLKEAEEAGPVPPEWMFEDVFAEKPWHLLRQEALLKEEL.

Residues Phe-66, Tyr-95, 128-131, and Ser-144 each bind substrate; that span reads MPEH. 94-96 contacts thiamine diphosphate; the sequence is YYR. Residues 144-146, 174-180, 204-208, and His-273 contribute to the thiamine diphosphate site; these read SPI, GDGATSE, and NFYAI. The Mg(2+) site is built by Asp-175, Asn-204, and Tyr-206.

Belongs to the BCKDHA family. In terms of assembly, heterotetramer of two alpha and two beta chains. Directly associated with ODBB in the E1 complex. The cofactor is thiamine diphosphate.

It carries out the reaction N(6)-[(R)-lipoyl]-L-lysyl-[protein] + 3-methyl-2-oxobutanoate + H(+) = N(6)-[(R)-S(8)-2-methylpropanoyldihydrolipoyl]-L-lysyl-[protein] + CO2. Functionally, the branched-chain alpha-keto dehydrogenase complex catalyzes the overall conversion of alpha-keto acids to acyl-CoA and CO(2). It contains multiple copies of three enzymatic components: branched-chain alpha-keto acid decarboxylase (E1), lipoamide acyltransferase (E2) and lipoamide dehydrogenase (E3). The protein is 2-oxoisovalerate dehydrogenase subunit alpha of Thermus thermophilus (strain ATCC 27634 / DSM 579 / HB8).